An 874-amino-acid chain; its full sequence is Protein translocase subunit SecA (874 aa).

Residues Gln87, 105–109 (GEGKT), and Asp512 contribute to the ATP site. Zn(2+)-binding residues include Cys859, Cys861, Cys870, and His871.

It belongs to the SecA family. In terms of assembly, monomer and homodimer. Part of the essential Sec protein translocation apparatus which comprises SecA, SecYEG and auxiliary proteins SecDF-YajC and YidC. Requires Zn(2+) as cofactor.

It localises to the cell inner membrane. The protein localises to the cytoplasm. The enzyme catalyses ATP + H2O + cellular proteinSide 1 = ADP + phosphate + cellular proteinSide 2.. Functionally, part of the Sec protein translocase complex. Interacts with the SecYEG preprotein conducting channel. Has a central role in coupling the hydrolysis of ATP to the transfer of proteins into and across the cell membrane, serving both as a receptor for the preprotein-SecB complex and as an ATP-driven molecular motor driving the stepwise translocation of polypeptide chains across the membrane. The protein is Protein translocase subunit SecA of Buchnera aphidicola subsp. Schizaphis graminum (strain Sg).